The sequence spans 337 residues: GTPase Obg (337 aa).

An Obg domain is found at 1–159; the sequence is MKFVDSATIS…FELEMELKLM (159 aa). Residues 160–322 form the OBG-type G domain; sequence ADVGLVGFPN…LKDELWRQVS (163 aa). GTP contacts are provided by residues 166–173, 191–195, 213–216, 280–283, and 303–305; these read GFPNAGKS, FTTLV, DIPG, TKMD, and SSV. Residues serine 173 and threonine 193 each contribute to the Mg(2+) site.

It belongs to the TRAFAC class OBG-HflX-like GTPase superfamily. OBG GTPase family. As to quaternary structure, monomer. Requires Mg(2+) as cofactor.

It localises to the cytoplasm. In terms of biological role, an essential GTPase which binds GTP, GDP and possibly (p)ppGpp with moderate affinity, with high nucleotide exchange rates and a fairly low GTP hydrolysis rate. Plays a role in control of the cell cycle, stress response, ribosome biogenesis and in those bacteria that undergo differentiation, in morphogenesis control. In Chlorobium phaeobacteroides (strain DSM 266 / SMG 266 / 2430), this protein is GTPase Obg.